The following is a 348-amino-acid chain: Dihydroorotase (348 aa).

His-14 and His-16 together coordinate Zn(2+). Residues 16–18 (HLR) and Asn-42 each bind substrate. The Zn(2+) site is built by Lys-100, His-137, and His-175. N6-carboxylysine is present on Lys-100. His-137 contacts substrate. Leu-220 lines the substrate pocket. Asp-248 is a binding site for Zn(2+). Residue Asp-248 is part of the active site. Residues His-252 and Ala-264 each contribute to the substrate site.

Belongs to the metallo-dependent hydrolases superfamily. DHOase family. Class II DHOase subfamily. In terms of assembly, homodimer. It depends on Zn(2+) as a cofactor.

It catalyses the reaction (S)-dihydroorotate + H2O = N-carbamoyl-L-aspartate + H(+). The protein operates within pyrimidine metabolism; UMP biosynthesis via de novo pathway; (S)-dihydroorotate from bicarbonate: step 3/3. In terms of biological role, catalyzes the reversible cyclization of carbamoyl aspartate to dihydroorotate. This is Dihydroorotase from Pseudomonas putida (strain ATCC 47054 / DSM 6125 / CFBP 8728 / NCIMB 11950 / KT2440).